We begin with the raw amino-acid sequence, 634 residues long: Threonine--tRNA ligase (634 aa).

The 61-residue stretch at 1–61 folds into the TGS domain; that stretch reads MINIRFPDGS…NSNCELRLIT (61 aa). The tract at residues 241-532 is catalytic; sequence DHRKIGKVLD…LIEHYAGNLP (292 aa). Residues Cys332, His383, and His509 each coordinate Zn(2+).

The protein belongs to the class-II aminoacyl-tRNA synthetase family. In terms of assembly, homodimer. The cofactor is Zn(2+).

The protein resides in the cytoplasm. It catalyses the reaction tRNA(Thr) + L-threonine + ATP = L-threonyl-tRNA(Thr) + AMP + diphosphate + H(+). In terms of biological role, catalyzes the attachment of threonine to tRNA(Thr) in a two-step reaction: L-threonine is first activated by ATP to form Thr-AMP and then transferred to the acceptor end of tRNA(Thr). Also edits incorrectly charged L-seryl-tRNA(Thr). The protein is Threonine--tRNA ligase of Francisella tularensis subsp. mediasiatica (strain FSC147).